Reading from the N-terminus, the 177-residue chain is Arginine metabolism regulation protein I (177 aa).

The span at Met1–Pro12 shows a compositional bias: polar residues. Disordered regions lie at residues Met1–Lys82 and Asn157–Asn177. A compositionally biased stretch (acidic residues) spans Gln40 to Asp53. Residues Ser56–Thr67 are compositionally biased toward low complexity. Residues Arg80 to Phe134 enclose the MADS-box domain. Polar residues predominate over residues Ala158–Asn177.

In terms of assembly, interacts with ARG81 and ARG82.

It is found in the nucleus. In terms of biological role, with ARG81, ARG82 and MCM1, coordinates the expression of arginine anabolic and catabolic genes in response to arginine. In Saccharomyces cerevisiae (strain ATCC 204508 / S288c) (Baker's yeast), this protein is Arginine metabolism regulation protein I (ARG80).